Reading from the N-terminus, the 405-residue chain is Intraflagellar transport protein 57 homolog (405 aa).

Residues 252–380 adopt a coiled-coil conformation; it reads ETLKTNILEN…AQLNLEVALL (129 aa).

This sequence belongs to the IFT57 family.

Its subcellular location is the cytoplasm. The protein resides in the cytoskeleton. It is found in the cilium basal body. In terms of biological role, required for the formation of cilia. This is Intraflagellar transport protein 57 homolog from Drosophila melanogaster (Fruit fly).